The chain runs to 486 residues: Mitogen-activated protein kinase 17 (486 aa).

The region spanning 16-307 (YQIQEVVGKG…AEEALADPYF (292 aa)) is the Protein kinase domain. ATP is bound by residues 22-30 (VGKGSYGVV) and Lys-45. Residue Asp-142 is the Proton acceptor of the active site. Position 178 is a phosphothreonine (Thr-178). A TXY motif is present at residues 178 to 180 (TDY). Residue Tyr-180 is modified to Phosphotyrosine. Phosphothreonine is present on Thr-183. A disordered region spans residues 386–455 (EEHNDDEEEH…LSSQKASQVD (70 aa)). Over residues 422–433 (SVHAQSSSASVV) the composition is skewed to low complexity. A compositionally biased stretch (polar residues) spans 440–452 (PNTATGLSSQKAS).

The protein belongs to the protein kinase superfamily. CMGC Ser/Thr protein kinase family. MAP kinase subfamily. Dually phosphorylated on Thr-178 and Tyr-180, which activates the enzyme.

The enzyme catalyses L-seryl-[protein] + ATP = O-phospho-L-seryl-[protein] + ADP + H(+). It catalyses the reaction L-threonyl-[protein] + ATP = O-phospho-L-threonyl-[protein] + ADP + H(+). With respect to regulation, activated by threonine and tyrosine phosphorylation. The protein is Mitogen-activated protein kinase 17 (MPK17) of Arabidopsis thaliana (Mouse-ear cress).